Consider the following 197-residue polypeptide: Isopentenyl-diphosphate Delta-isomerase (197 aa).

Mn(2+) contacts are provided by His-41 and His-48. The region spanning 46 to 183 is the Nudix hydrolase domain; the sequence is RLHRAFSVFL…AWFMTVLDAA (138 aa). Cys-83 is an active-site residue. Cys-83 provides a ligand contact to Mg(2+). Position 85 (His-85) interacts with Mn(2+). Glu-103 is a Mg(2+) binding site. Mn(2+)-binding residues include Glu-130 and Glu-132. The active site involves Glu-132.

Belongs to the IPP isomerase type 1 family. Requires Mg(2+) as cofactor. It depends on Mn(2+) as a cofactor.

Its subcellular location is the cytoplasm. The catalysed reaction is isopentenyl diphosphate = dimethylallyl diphosphate. It functions in the pathway isoprenoid biosynthesis; dimethylallyl diphosphate biosynthesis; dimethylallyl diphosphate from isopentenyl diphosphate: step 1/1. In terms of biological role, catalyzes the 1,3-allylic rearrangement of the homoallylic substrate isopentenyl (IPP) to its highly electrophilic allylic isomer, dimethylallyl diphosphate (DMAPP). In Streptomyces coelicolor (strain ATCC BAA-471 / A3(2) / M145), this protein is Isopentenyl-diphosphate Delta-isomerase.